The primary structure comprises 563 residues: Proton channel OTOP2 (563 aa).

Residues Met-1 to Pro-20 form a disordered region. 12 helical membrane passes run Leu-30–Gly-50, Val-62–Leu-82, Pro-100–Phe-120, Ile-137–Ser-157, Leu-173–Val-193, Phe-242–Met-262, Phe-290–Leu-310, Ala-325–Leu-345, Leu-373–Val-393, Leu-403–Ile-423, Asp-496–Ala-516, and Phe-528–Tyr-548.

It belongs to the otopetrin family. In terms of tissue distribution, expressed at higher level in stomach, testis and olfactory bulb.

The protein localises to the cell membrane. It carries out the reaction H(+)(in) = H(+)(out). Actives at neutral and alkaline extracellular pH, acid extracellular pH appears to inhibit the channel. Insensitive to activation by Zn(2+). Proton-selective ion channel open at neutral pH. Actives at neutral and alkaline extracellular pH, likely participates in some alkali-related physiological activities. The protein is Proton channel OTOP2 of Mus musculus (Mouse).